A 401-amino-acid chain; its full sequence is Probable tRNA sulfurtransferase (401 aa).

The THUMP domain occupies T63–R168. ATP contacts are provided by residues L186 to L187, Y211 to F212, R268, G290, and Q299.

This sequence belongs to the ThiI family.

It is found in the cytoplasm. It catalyses the reaction [ThiI sulfur-carrier protein]-S-sulfanyl-L-cysteine + a uridine in tRNA + 2 reduced [2Fe-2S]-[ferredoxin] + ATP + H(+) = [ThiI sulfur-carrier protein]-L-cysteine + a 4-thiouridine in tRNA + 2 oxidized [2Fe-2S]-[ferredoxin] + AMP + diphosphate. The catalysed reaction is [ThiS sulfur-carrier protein]-C-terminal Gly-Gly-AMP + S-sulfanyl-L-cysteinyl-[cysteine desulfurase] + AH2 = [ThiS sulfur-carrier protein]-C-terminal-Gly-aminoethanethioate + L-cysteinyl-[cysteine desulfurase] + A + AMP + 2 H(+). It functions in the pathway cofactor biosynthesis; thiamine diphosphate biosynthesis. In terms of biological role, catalyzes the ATP-dependent transfer of a sulfur to tRNA to produce 4-thiouridine in position 8 of tRNAs, which functions as a near-UV photosensor. Also catalyzes the transfer of sulfur to the sulfur carrier protein ThiS, forming ThiS-thiocarboxylate. This is a step in the synthesis of thiazole, in the thiamine biosynthesis pathway. The sulfur is donated as persulfide by IscS. The chain is Probable tRNA sulfurtransferase from Treponema pallidum (strain Nichols).